Here is a 172-residue protein sequence, read N- to C-terminus: 3-hydroxydecanoyl-[acyl-carrier-protein] dehydratase (172 aa).

Residue His71 is part of the active site.

Belongs to the thioester dehydratase family. FabA subfamily. In terms of assembly, homodimer.

The protein resides in the cytoplasm. It carries out the reaction a (3R)-hydroxyacyl-[ACP] = a (2E)-enoyl-[ACP] + H2O. The enzyme catalyses (3R)-hydroxydecanoyl-[ACP] = (2E)-decenoyl-[ACP] + H2O. The catalysed reaction is (2E)-decenoyl-[ACP] = (3Z)-decenoyl-[ACP]. It functions in the pathway lipid metabolism; fatty acid biosynthesis. In terms of biological role, necessary for the introduction of cis unsaturation into fatty acids. Catalyzes the dehydration of (3R)-3-hydroxydecanoyl-ACP to E-(2)-decenoyl-ACP and then its isomerization to Z-(3)-decenoyl-ACP. Can catalyze the dehydratase reaction for beta-hydroxyacyl-ACPs with saturated chain lengths up to 16:0, being most active on intermediate chain length. This is 3-hydroxydecanoyl-[acyl-carrier-protein] dehydratase from Escherichia coli (strain 55989 / EAEC).